The chain runs to 245 residues: Aquaporin SIP1-1 (245 aa).

Transmembrane regions (helical) follow at residues 14 to 34 (AVVTFLWVLCASALGASTAAV) and 55 to 75 (LLSVLLFTFDLLCGALGGASF). The NPA 1 motif lies at 76–78 (NPT). 3 helical membrane-spanning segments follow: residues 100–120 (FPAQAAGAVGGALAISELMPA), 138–158 (GALAEGVLTFVITLTVLWVIV), and 164–184 (VILKTLLLSTSIVSVILAGAE). An NPA 2 motif is present at residues 191–193 (NPA). The chain crosses the membrane as a helical span at residues 213-233 (VYWICPFIGAMLAGWIFRVVF).

It belongs to the MIP/aquaporin (TC 1.A.8) family. SIP (TC 1.A.8.10) subfamily.

The protein resides in the membrane. Its function is as follows. Aquaporins facilitate the transport of water and small neutral solutes across cell membranes. The chain is Aquaporin SIP1-1 (SIP1-1) from Zea mays (Maize).